The primary structure comprises 403 residues: Eukaryotic translation initiation factor 3 subunit H (403 aa).

The 150-residue stretch at 57–206 folds into the MPN domain; that stretch reads VRLDGLALTK…VKAYRLSPSF (150 aa). Residues 99–122 are disordered; sequence ALPNPGRSNSERDEEEDRSSRNAT.

It belongs to the eIF-3 subunit H family. Component of the eukaryotic translation initiation factor 3 (eIF-3) complex.

The protein resides in the cytoplasm. Component of the eukaryotic translation initiation factor 3 (eIF-3) complex, which is involved in protein synthesis of a specialized repertoire of mRNAs and, together with other initiation factors, stimulates binding of mRNA and methionyl-tRNAi to the 40S ribosome. The eIF-3 complex specifically targets and initiates translation of a subset of mRNAs involved in cell proliferation. This chain is Eukaryotic translation initiation factor 3 subunit H, found in Mycosarcoma maydis (Corn smut fungus).